Here is a 481-residue protein sequence, read N- to C-terminus: Arf-GAP domain and FG repeat-containing protein 2 (481 aa).

Residues 27-153 (EVWCRRVREL…WYVPPDQVKG (127 aa)) enclose the Arf-GAP domain. Residues 47-70 (CFECAQRGVTYVDITVGSFVCTTC) form a C4-type zinc finger. Disordered stretches follow at residues 150 to 220 (QVKG…SVKK), 271 to 309 (SSVF…APAS), and 431 to 481 (QQNG…NPFL). The span at 157–166 (TKGSASTPVQ) shows a compositional bias: polar residues. Lys-173 is modified (N6-acetyllysine). Composition is skewed to polar residues over residues 188–210 (VAAS…ARST), 283–298 (ASFQ…SQGT), and 454–481 (AGIS…NPFL).

As to quaternary structure, interacts with EPS15R.

This is Arf-GAP domain and FG repeat-containing protein 2 (AGFG2) from Homo sapiens (Human).